The sequence spans 259 residues: GTP cyclohydrolase FolE2 (259 aa).

It belongs to the GTP cyclohydrolase IV family.

It catalyses the reaction GTP + H2O = 7,8-dihydroneopterin 3'-triphosphate + formate + H(+). It functions in the pathway cofactor biosynthesis; 7,8-dihydroneopterin triphosphate biosynthesis; 7,8-dihydroneopterin triphosphate from GTP: step 1/1. In terms of biological role, converts GTP to 7,8-dihydroneopterin triphosphate. This is GTP cyclohydrolase FolE2 from Thermosipho melanesiensis (strain DSM 12029 / CIP 104789 / BI429).